A 413-amino-acid chain; its full sequence is MAVNFPSIDPAQLHPVAGVTLGWAEANIRKPNRKDVLVVSVEEGATVSGVFTENRFCAAPVTVCREHLAKVRAGGAGIRALVVNTGNANAGTGEPGLAHARETCAELARLAGIAPGQVLPFSTGVILEPLPIERLKAGLPAALANRAAANWHDAAQAIMTTDTLPKAASRQVMIDGHTITLTGISKGAGMIKPNMATMLGFLAFDAKVAQPVLDALVKDVADRSFNCITIDGDTSTNDSFILIASGKASLPQIASTDSPAYAALREAVTSVAQALAQLIVRDGEGATKFITVTVEGGKSAAECRQIAYAIGHSPLVKTAFYASDPNLGRILAAIGYAGVADLDVGKIDLYLDDVLVAKAGGRNPAYLEEDGQRVMKQSEIAVRVLLGRGDAQATIWTCDLSHDYVSINADYRS.

Threonine 160, lysine 186, threonine 197, glutamate 284, asparagine 408, and serine 413 together coordinate substrate. Threonine 197 functions as the Nucleophile in the catalytic mechanism.

The protein belongs to the ArgJ family. As to quaternary structure, heterotetramer of two alpha and two beta chains.

Its subcellular location is the cytoplasm. It catalyses the reaction N(2)-acetyl-L-ornithine + L-glutamate = N-acetyl-L-glutamate + L-ornithine. It carries out the reaction L-glutamate + acetyl-CoA = N-acetyl-L-glutamate + CoA + H(+). The protein operates within amino-acid biosynthesis; L-arginine biosynthesis; L-ornithine and N-acetyl-L-glutamate from L-glutamate and N(2)-acetyl-L-ornithine (cyclic): step 1/1. It participates in amino-acid biosynthesis; L-arginine biosynthesis; N(2)-acetyl-L-ornithine from L-glutamate: step 1/4. Its function is as follows. Catalyzes two activities which are involved in the cyclic version of arginine biosynthesis: the synthesis of N-acetylglutamate from glutamate and acetyl-CoA as the acetyl donor, and of ornithine by transacetylation between N(2)-acetylornithine and glutamate. The sequence is that of Arginine biosynthesis bifunctional protein ArgJ from Burkholderia mallei (strain ATCC 23344).